A 465-amino-acid polypeptide reads, in one-letter code: MSSELMFNYTFSWPAGPKDVILTGTFDDWRGTLPLVKTAKGNFEITMPVKLANKDDTFQFKFIVDGVWCVSDSYKKEHVSEGIENNFLQITDLVETQEVAGASRIPEAGGLLCGKPPRSAGPPSTSNRKKNKRNNKKRRSKLKKKSTKNNKKSNESLDDNEEEDGVTGTTTEDVTGTSREETPLAEPTNVSKEAPGNFHILPIDQSADTTQSNGIIGGPGPVLVPNPGEIKEFTEIRDVDARELNERLNKKEEVPEPVAGPIVESSVTEKSPALPQADDPIVETKEVAHNVQELTPQVEAVTPLINEPEPLPTPEAQISIPESSKVEPVEGSLQSKLVEKRESTEGVLDGSKKVENKAKKDEEVFTLDPIVNKAPKLPLTDEQTAEGRKSPAVSEEKEKKKKQEKGSKEVKRSETSKEKKPSAKEVKKQTVKASKKQTASPLSSSTEEPKKKKTGFFGKLKKLFK.

Disordered stretches follow at residues 107 to 227 and 247 to 276; these read EAGG…VPNP and RLNKKEEVPEPVAGPIVESSVTEKSPALPQ. The span at 127–151 shows a compositional bias: basic residues; sequence NRKKNKRNNKKRRSKLKKKSTKNNK. Phosphoserine is present on residues Ser-153 and Ser-156. Residues 156-165 are compositionally biased toward acidic residues; it reads SLDDNEEEDG. Residues 160–161 are X-DNA-binding; that stretch reads NE. Residues 166–177 show a composition bias toward low complexity; the sequence is VTGTTTEDVTGT. The residue at position 182 (Thr-182) is a Phosphothreonine. Phosphoserine is present on Ser-271. Thr-295 is subject to Phosphothreonine. The tract at residues 298-465 is disordered; that stretch reads VEAVTPLINE…FFGKLKKLFK (168 aa). Residues Ser-319 and Ser-343 each carry the phosphoserine modification. Positions 337–363 are enriched in basic and acidic residues; the sequence is LVEKRESTEGVLDGSKKVENKAKKDEE. The residue at position 366 (Thr-366) is a Phosphothreonine. Basic and acidic residues-rich tracts occupy residues 385–398 and 404–428; these read AEGRKSPAVSEEKE and EKGSKEVKRSETSKEKKPSAKEVKK. Ser-394 is subject to Phosphoserine. Residue Ser-440 is modified to Phosphoserine. Residues 451–465 show a composition bias toward basic residues; the sequence is KKKTGFFGKLKKLFK.

Belongs to the CRP1/MDG1 family. Post-translationally, cleaved in the vicinity of position 160 to give an X-DNA-binding N-terminal subpeptide and a non-DNA-binding C-terminal subpeptide.

Its function is as follows. Cruciform DNA-binding protein which exerts an enhancing effect on the cleavage of cruciform DNA (X-DNA) by endonuclease VII from bacteriophage T4. The sequence is that of Cruciform DNA-recognizing protein 1 (CRP1) from Saccharomyces cerevisiae (strain RM11-1a) (Baker's yeast).